The sequence spans 980 residues: Putative formate dehydrogenase YrhE (980 aa).

The 77-residue stretch at 5–81 (KSISVRVDGT…GMSIDLSGNR (77 aa)) folds into the 2Fe-2S ferredoxin-type domain. 4 residues coordinate [2Fe-2S] cluster: Cys39, Cys50, Cys53, and Cys65. Residues 81–121 (RVKEAQTEAMDRLLENHLLYCTVCDNNNGNCTLHNTAEMMG) enclose the 4Fe-4S His(Cys)3-ligated-type domain. [4Fe-4S] cluster contacts are provided by His97, Cys101, Cys104, Cys111, Cys153, Cys156, Cys159, Cys163, Cys196, Cys199, Cys202, Cys206, Cys270, Cys273, Cys277, and Cys305. 4Fe-4S ferredoxin-type domains lie at 144–171 (PFYR…VNET) and 187–216 (EGVP…EKSM). The interval 258–980 (MRETRTKKTK…NRPGYVHLTD (723 aa)) is formate dehydrogenase. The 4Fe-4S Mo/W bis-MGD-type domain occupies 263-319 (TKKTKTVCTFCGVGCSFEVWTKGRDILKIQPVSDAPVNAISTCVKGKFGWDFVNSKE). Positions 944-980 (ETAPLPKTNPRNKKRHPQNGVEAERKWNRPGYVHLTD) are disordered.

The protein in the C-terminal section; belongs to the prokaryotic molybdopterin-containing oxidoreductase family. Requires [2Fe-2S] cluster as cofactor. [4Fe-4S] cluster is required as a cofactor. It depends on Mo-bis(molybdopterin guanine dinucleotide) as a cofactor.

The catalysed reaction is formate + NAD(+) = CO2 + NADH. The sequence is that of Putative formate dehydrogenase YrhE (yrhE) from Bacillus subtilis (strain 168).